Here is a 601-residue protein sequence, read N- to C-terminus: DNA mismatch repair protein MutL (601 aa).

The protein belongs to the DNA mismatch repair MutL/HexB family.

In terms of biological role, this protein is involved in the repair of mismatches in DNA. It is required for dam-dependent methyl-directed DNA mismatch repair. May act as a 'molecular matchmaker', a protein that promotes the formation of a stable complex between two or more DNA-binding proteins in an ATP-dependent manner without itself being part of a final effector complex. The sequence is that of DNA mismatch repair protein MutL from Listeria monocytogenes serovar 1/2a (strain ATCC BAA-679 / EGD-e).